We begin with the raw amino-acid sequence, 1258 residues long: Serine/threonine-protein kinase Nek1 (1258 aa).

In terms of domain architecture, Protein kinase spans Tyr-4–Ile-258. Residues Ile-10 to Ala-18 and Lys-33 contribute to the ATP site. The Proton acceptor role is filled by Asp-128. Position 156 is a phosphothreonine (Thr-156). At Thr-162 the chain carries Phosphothreonine; by autocatalysis. Positions His-330–Glu-360 are disordered. Basic and acidic residues predominate over residues Thr-344–Glu-360. A phosphoserine mark is found at Ser-414, Ser-418, Ser-428, and Ser-438. Disordered regions lie at residues Lys-578–Met-600, Lys-648–Gln-669, and Val-685–Asn-704. The segment covering Leu-579 to Gly-591 has biased composition (basic and acidic residues). Ser-653 carries the post-translational modification Phosphoserine. Position 661 is a phosphothreonine (Thr-661). At Ser-664 the chain carries Phosphoserine. Over residues Asp-691–Gln-700 the composition is skewed to basic and acidic residues. Residues Ser-798, Ser-834, Ser-868, Ser-881, Ser-1052, and Ser-1126 each carry the phosphoserine modification. The segment at Arg-1118–Gly-1171 is disordered.

Belongs to the protein kinase superfamily. NEK Ser/Thr protein kinase family. NIMA subfamily. Binds to CBY2. Found in a complex with CFAP410, NEK1 and SPATA7. Interacts with CFAP410. Interacts (via Ser-1052 phosphorylated form) with 14-3-3 proteins. It depends on Mg(2+) as a cofactor. In terms of tissue distribution, high fetal expression in the brain and kidney.

The protein localises to the nucleus. It localises to the cytoplasm. It is found in the cytoskeleton. The protein resides in the microtubule organizing center. Its subcellular location is the centrosome. The catalysed reaction is L-seryl-[protein] + ATP = O-phospho-L-seryl-[protein] + ADP + H(+). It catalyses the reaction L-threonyl-[protein] + ATP = O-phospho-L-threonyl-[protein] + ADP + H(+). In terms of biological role, phosphorylates serines and threonines, but also appears to possess tyrosine kinase activity. Involved in DNA damage checkpoint control and for proper DNA damage repair. In response to injury that includes DNA damage, NEK1 phosphorylates VDAC1 to limit mitochondrial cell death. May be implicated in the control of meiosis. Involved in cilium assembly. The chain is Serine/threonine-protein kinase Nek1 (NEK1) from Homo sapiens (Human).